The chain runs to 495 residues: NAD(+)--protein-arginine ADP-ribosyltransferase Tre1 (495 aa).

The disordered stretch occupies residues 278 to 309; it reads PDLQIKGPTPVKKPEPLQPARQPEKASAPKPV. Residues 315-495 form the TR mART core domain; that stretch reads MSLREAVGNQ…VTQFILKEIP (181 aa). Positions 344-495 are ART domain; sequence RSALLTDDQI…VTQFILKEIP (152 aa). Catalysis depends on residues arginine 406, serine 431, and glutamate 466.

The protein belongs to the Arg-specific ADP-ribosyltransferase family.

It is found in the secreted. Its subcellular location is the host cytoplasm. It carries out the reaction L-arginyl-[protein] + NAD(+) = N(omega)-(ADP-D-ribosyl)-L-arginyl-[protein] + nicotinamide + H(+). In terms of biological role, toxic component of a contact-dependent interbacterial competition system (also called effector-immunity systems). Acts by ADP-ribosylating a number of target proteins in target cells; E.coli target proteins include FtsZ, EFTu, RNase E, Fis, YegQ, GuaB and IF2. The chain is NAD(+)--protein-arginine ADP-ribosyltransferase Tre1 from Pseudomonas putida (strain GB-1).